A 431-amino-acid polypeptide reads, in one-letter code: Enolase (431 aa).

Glutamine 167 provides a ligand contact to (2R)-2-phosphoglycerate. The Proton donor role is filled by glutamate 209. The Mg(2+) site is built by aspartate 246, glutamate 289, and aspartate 316. Positions 341, 370, 371, and 392 each coordinate (2R)-2-phosphoglycerate. The active-site Proton acceptor is the lysine 341.

This sequence belongs to the enolase family. In terms of assembly, component of the RNA degradosome, a multiprotein complex involved in RNA processing and mRNA degradation. Requires Mg(2+) as cofactor.

The protein localises to the cytoplasm. Its subcellular location is the secreted. It localises to the cell surface. It carries out the reaction (2R)-2-phosphoglycerate = phosphoenolpyruvate + H2O. It functions in the pathway carbohydrate degradation; glycolysis; pyruvate from D-glyceraldehyde 3-phosphate: step 4/5. Catalyzes the reversible conversion of 2-phosphoglycerate (2-PG) into phosphoenolpyruvate (PEP). It is essential for the degradation of carbohydrates via glycolysis. The chain is Enolase from Chromohalobacter salexigens (strain ATCC BAA-138 / DSM 3043 / CIP 106854 / NCIMB 13768 / 1H11).